A 736-amino-acid polypeptide reads, in one-letter code: Polyribonucleotide nucleotidyltransferase (736 aa).

Mg(2+) is bound by residues D488 and D494. Residues 555–614 (PMVQTLEIQKEKIRDVIGLGGKVIKELCKTFDVEIDISENGEVKVWGNVGENVKKAVQSI) enclose the KH domain. An S1 motif domain is found at 624–692 (GDIFDGEVVK…HKNRVKLTLR (69 aa)).

Belongs to the polyribonucleotide nucleotidyltransferase family. It depends on Mg(2+) as a cofactor.

Its subcellular location is the cytoplasm. The enzyme catalyses RNA(n+1) + phosphate = RNA(n) + a ribonucleoside 5'-diphosphate. Functionally, involved in mRNA degradation. Catalyzes the phosphorolysis of single-stranded polyribonucleotides processively in the 3'- to 5'-direction. This chain is Polyribonucleotide nucleotidyltransferase, found in Orientia tsutsugamushi (strain Ikeda) (Rickettsia tsutsugamushi).